Here is a 383-residue protein sequence, read N- to C-terminus: Na(+)/H(+) antiporter NhaA (383 aa).

The next 11 helical transmembrane spans lie at 10-30 (LIGG…NNSP), 56-76 (LMHW…GLEI), 91-111 (IITP…IYLS), 121-141 (GWAI…ALLG), 150-170 (LLVI…IAIF), 174-194 (SLSL…IICN), 206-226 (VVLG…ATLA), 254-274 (PWII…ISFS), 289-308 (IIWG…LAVF), 327-347 (GISL…VLAF), and 355-375 (AIKI…YIVL).

This sequence belongs to the NhaA Na(+)/H(+) (TC 2.A.33) antiporter family.

It is found in the cell inner membrane. The enzyme catalyses Na(+)(in) + 2 H(+)(out) = Na(+)(out) + 2 H(+)(in). Functionally, na(+)/H(+) antiporter that extrudes sodium in exchange for external protons. The sequence is that of Na(+)/H(+) antiporter NhaA from Francisella tularensis subsp. mediasiatica (strain FSC147).